A 384-amino-acid polypeptide reads, in one-letter code: Nodal homolog 2-B (384 aa).

The first 18 residues, 1 to 18, serve as a signal peptide directing secretion; the sequence is MASLGAILLFAIASLMHG. Residues 19–283 constitute a propeptide that is removed on maturation; sequence RPIHSDRKGA…RVADARRHRR (265 aa). Asn-71, Asn-173, and Asn-344 each carry an N-linked (GlcNAc...) asparagine glycan. A disulfide bridge links Cys-306 with Cys-372.

It belongs to the TGF-beta family. In terms of assembly, homodimer; disulfide-linked. Forms heterodimers with the TGF-beta family member derriere. Interacts with tsku; enhances nodal2 activity.

It localises to the secreted. In terms of biological role, cooperation and regulatory loops of multiple nodals are essential for mesendoderm patterning in early embryos. Essential for mesoderm formation and axial patterning during embryonic development. Activates the activin-like signaling pathway to induce dorsal and ventral mesoderm in animal cap ectoderm. In addition, also dorsalizes ventral marginal zone (VMZ) tissues during gastrulation. Induces muscle actin. Appears to act as both a short-range and long-range morphogen. The unprocessed protein inhibits bmp- and wnt-signaling. This chain is Nodal homolog 2-B (nodal2-b), found in Xenopus laevis (African clawed frog).